We begin with the raw amino-acid sequence, 36 residues long: Mu/omega-theraphotoxin-Pmu1a (36 aa).

Cystine bridges form between C2–C16, C9–C21, and C15–C29.

This sequence belongs to the neurotoxin 10 (Hwtx-1) family. In terms of tissue distribution, expressed by the venom gland.

Its subcellular location is the secreted. Functionally, gating-modifier toxin that targets both voltage-gated sodium and calcium channels, with described activities on human Nav1.7/SCN9A (IC(50)=5.5-7 nM), hNav1.6/SCN10A (IC(50)=9.9 nM), hNav1.4/SCN4A (IC(50)=62.9 nM), hCav3.2/CACNA1H (IC(50)=955.4 nM or 63.5% inhibition at 10 uM), hCav3.1/CACNA1G (95.1% inhibition at 10 uM), hCav3.3/CACNA1I (90.8% inhibition at 10 uM). Acts on Cav3 currents mainly by inducing a strong depolarizing shift in the current-voltage curve. This is Mu/omega-theraphotoxin-Pmu1a from Pterinochilus murinus (Mombasa golden starburst baboon spider).